A 340-amino-acid polypeptide reads, in one-letter code: Tetraacyldisaccharide 4'-kinase (340 aa).

51–58 (HMGGAGKT) is a binding site for ATP.

The protein belongs to the LpxK family.

The enzyme catalyses a lipid A disaccharide + ATP = a lipid IVA + ADP + H(+). It participates in glycolipid biosynthesis; lipid IV(A) biosynthesis; lipid IV(A) from (3R)-3-hydroxytetradecanoyl-[acyl-carrier-protein] and UDP-N-acetyl-alpha-D-glucosamine: step 6/6. Functionally, transfers the gamma-phosphate of ATP to the 4'-position of a tetraacyldisaccharide 1-phosphate intermediate (termed DS-1-P) to form tetraacyldisaccharide 1,4'-bis-phosphate (lipid IVA). The chain is Tetraacyldisaccharide 4'-kinase from Rhodopseudomonas palustris (strain TIE-1).